Consider the following 140-residue polypeptide: Histone H2B (140 aa).

Basic and acidic residues predominate over residues 1–10; it reads MPPKAAEKKP. The interval 1–48 is disordered; sequence MPPKAAEKKPTTGGKAPAGKAPAEKKEAGKKTAAAASGDKKKRGKTRK. N6-acetyllysine; alternate is present on residues Lys-8 and Lys-9. Residues Lys-8 and Lys-9 each participate in a glycyl lysine isopeptide (Lys-Gly) (interchain with G-Cter in SUMO); alternate cross-link. Positions 11–21 are enriched in low complexity; the sequence is TTGGKAPAGKA. Lys-15 carries the N6-acetyllysine modification. Position 25 is an N6-acetyllysine; alternate (Lys-25). A Glycyl lysine isopeptide (Lys-Gly) (interchain with G-Cter in SUMO); alternate cross-link involves residue Lys-25. A Glycyl lysine isopeptide (Lys-Gly) (interchain with G-Cter in SUMO) cross-link involves residue Lys-26. Lys-134 participates in a covalent cross-link: Glycyl lysine isopeptide (Lys-Gly) (interchain with G-Cter in ubiquitin).

This sequence belongs to the histone H2B family. As to quaternary structure, the nucleosome is a histone octamer containing two molecules each of H2A, H2B, H3 and H4 assembled in one H3-H4 heterotetramer and two H2A-H2B heterodimers. The octamer wraps approximately 147 bp of DNA. Post-translationally, monoubiquitinated by the ubc2-bre1 complex to form H2BK123ub1. H2BK123ub1 gives a specific tag for epigenetic transcriptional activation and is also prerequisite for H3K4me and H3K79me formation. H2BK123ub1 also modulates the formation of double-strand breaks during meiosis and is a prerequisite for DNA-damage checkpoint activation. Acetylated by gcn5 to form H2BK11ac and H2BK16ac. H2BK16ac can also be formed by esa1. Acetylation of N-terminal lysines and particularly formation of H2BK11acK16ac has a positive effect on transcription. In terms of processing, sumoylation to form H2BK6su or H2BK7su, and probably also H2BK16su or H2BK17su, occurs preferentially near the telomeres and represses gene transcription.

The protein resides in the nucleus. Its subcellular location is the chromosome. In terms of biological role, core component of nucleosome. Nucleosomes wrap and compact DNA into chromatin, limiting DNA accessibility to the cellular machineries which require DNA as a template. Histones thereby play a central role in transcription regulation, DNA repair, DNA replication and chromosomal stability. DNA accessibility is regulated via a complex set of post-translational modifications of histones, also called histone code, and nucleosome remodeling. The protein is Histone H2B (htb1) of Aspergillus terreus (strain NIH 2624 / FGSC A1156).